Here is a 159-residue protein sequence, read N- to C-terminus: MTHFETRPLCSLNSPLLCGFFPIKLAVLLVQLIAIVIQFCMLYYNGNQEEIVFVAMVLLLVFTISSFVAFLGEYGTMMAIHYYVSCILLIWPAVVFIMKLISLCNKLFIEENATSRDAKDFMKITAILFAVIFYIWMCLQLIRVAKSRLILPRFTIRSN.

This is an uncharacterized protein from Caenorhabditis elegans.